The following is a 252-amino-acid chain: 5-oxoprolinase subunit A (252 aa).

This sequence belongs to the LamB/PxpA family. In terms of assembly, forms a complex composed of PxpA, PxpB and PxpC.

It catalyses the reaction 5-oxo-L-proline + ATP + 2 H2O = L-glutamate + ADP + phosphate + H(+). Functionally, catalyzes the cleavage of 5-oxoproline to form L-glutamate coupled to the hydrolysis of ATP to ADP and inorganic phosphate. This chain is 5-oxoprolinase subunit A, found in Bordetella pertussis (strain Tohama I / ATCC BAA-589 / NCTC 13251).